The following is a 466-amino-acid chain: Rho GTPase-activating protein 1 (466 aa).

Disordered stretches follow at residues Met-1–Tyr-31 and Glu-65–Gly-84. A compositionally biased stretch (low complexity) spans Pro-8–Tyr-31. Basic and acidic residues predominate over residues Glu-65–Ser-74. The CRIB domain maps to Ile-117 to Thr-130. In terms of domain architecture, Rho-GAP spans Val-162–Arg-342. The interval Pro-354 to Leu-402 is disordered. Composition is skewed to polar residues over residues His-363–Glu-376 and Ser-383–Glu-397.

In terms of biological role, acts as a GTPase activator for the Rac-type GTPase by converting it to an inactive GDP-bound state. The polypeptide is Rho GTPase-activating protein 1 (ROPGAP1) (Arabidopsis thaliana (Mouse-ear cress)).